A 143-amino-acid chain; its full sequence is uncharacterized protein (143 aa).

Positions I24 to F78 constitute an HTH cro/C1-type domain. Residues Q35–K54 constitute a DNA-binding region (H-T-H motif).

This is an uncharacterized protein from Sinorhizobium fredii (strain NBRC 101917 / NGR234).